A 493-amino-acid polypeptide reads, in one-letter code: Putative glycerol-3-phosphate transporter 5 (493 aa).

The next 12 membrane-spanning stretches (helical) occupy residues 25–44 (FTFH…ASFH), 83–103 (LGEL…FAGH), 113–133 (FLVF…LGYW), 145–165 (VQIV…SVVG), 185–205 (SVGN…GWGW), 207–227 (FVLP…FLVV), 292–312 (FCLF…PYYL), 328–348 (GILS…AGFI), 352–372 (IKAR…ALIM), 375–395 (VYGS…GLLV), 428–448 (AIID…AGYI), and 452–472 (GWNS…LFLV).

The protein belongs to the major facilitator superfamily. Organophosphate:Pi antiporter (OPA) (TC 2.A.1.4) family.

The protein localises to the membrane. This chain is Putative glycerol-3-phosphate transporter 5, found in Arabidopsis thaliana (Mouse-ear cress).